Consider the following 818-residue polypeptide: Protein LDB19 (818 aa).

Residues 1–25 are disordered; it reads MAFSRLTSTHQSNHNGYSNSNKKGQ. Thr93 carries the phosphothreonine modification. The segment covering 352 to 361 has biased composition (basic and acidic residues); that stretch reads QVKIKESEKS. Positions 352-374 are disordered; sequence QVKIKESEKSKKPRSHIKRYGEL. Ser384 is subject to Phosphoserine. The segment at 388–436 is disordered; it reads MPSQRLPGEPGREQAPNSSGPASTGNVGLDDENPVNEDEEDQPGSEFIH. Positions 402-413 are enriched in polar residues; the sequence is APNSSGPASTGN. Positions 416–430 are enriched in acidic residues; it reads LDDENPVNEDEEDQP. Lys486 participates in a covalent cross-link: Glycyl lysine isopeptide (Lys-Gly) (interchain with G-Cter in ubiquitin). 2 disordered regions span residues 568–590 and 607–644; these read QPIRKPNSKNKKETNNNTMNVHN and TPKVRRMGPEDITPVNSNKSNHSTNKEKASNGASNSNI. A Phosphothreonine modification is found at Thr619. The span at 620 to 629 shows a compositional bias: polar residues; the sequence is PVNSNKSNHS. At Ser808 the chain carries Phosphoserine.

The protein belongs to the LDB19 family.

It localises to the cytoplasm. The protein localises to the golgi apparatus. May be involved in protein-linked oligosaccharide phosphorylation since the deletion reduces the negative charge of the cell surface. Involved in the resistance to EDTA, cadmium chloride, cycloheximide, 6-dimethylaminopurine, methyl caffeate, beta-chloro-L-alanine, caffeine and cerulenin. The polypeptide is Protein LDB19 (LDB19) (Saccharomyces cerevisiae (strain ATCC 204508 / S288c) (Baker's yeast)).